Here is a 566-residue protein sequence, read N- to C-terminus: Glucose-6-phosphate isomerase, cytosolic (566 aa).

Glu360 serves as the catalytic Proton donor. Catalysis depends on residues His391 and Lys516.

The protein belongs to the GPI family. In terms of assembly, homodimer.

It localises to the cytoplasm. It carries out the reaction alpha-D-glucose 6-phosphate = beta-D-fructose 6-phosphate. Its pathway is carbohydrate degradation; glycolysis; D-glyceraldehyde 3-phosphate and glycerone phosphate from D-glucose: step 2/4. The sequence is that of Glucose-6-phosphate isomerase, cytosolic (PGIC) from Spinacia oleracea (Spinach).